Reading from the N-terminus, the 370-residue chain is Phospho-N-acetylmuramoyl-pentapeptide-transferase (370 aa).

A run of 11 helical transmembrane segments spans residues 15–35 (PLEG…AAFA), 44–64 (LLSL…WWGV), 93–113 (MGGL…SWSG), 115–135 (AAEQ…VGGI), 155–175 (LLLQ…RGWI), 183–203 (FDIN…VFLA), 213–233 (GLDG…ALQL), 240–260 (GDPS…GFLV), 268–288 (VFMG…VALL), 296–316 (LIMG…VWVF), and 347–367 (QLVV…GIFF).

It belongs to the glycosyltransferase 4 family. MraY subfamily. The cofactor is Mg(2+).

Its subcellular location is the cell inner membrane. The enzyme catalyses UDP-N-acetyl-alpha-D-muramoyl-L-alanyl-gamma-D-glutamyl-meso-2,6-diaminopimeloyl-D-alanyl-D-alanine + di-trans,octa-cis-undecaprenyl phosphate = di-trans,octa-cis-undecaprenyl diphospho-N-acetyl-alpha-D-muramoyl-L-alanyl-D-glutamyl-meso-2,6-diaminopimeloyl-D-alanyl-D-alanine + UMP. Its pathway is cell wall biogenesis; peptidoglycan biosynthesis. In terms of biological role, catalyzes the initial step of the lipid cycle reactions in the biosynthesis of the cell wall peptidoglycan: transfers peptidoglycan precursor phospho-MurNAc-pentapeptide from UDP-MurNAc-pentapeptide onto the lipid carrier undecaprenyl phosphate, yielding undecaprenyl-pyrophosphoryl-MurNAc-pentapeptide, known as lipid I. The chain is Phospho-N-acetylmuramoyl-pentapeptide-transferase from Synechococcus sp. (strain CC9311).